Consider the following 152-residue polypeptide: Large ribosomal subunit protein bL9 (152 aa).

It belongs to the bacterial ribosomal protein bL9 family.

Functionally, binds to the 23S rRNA. The sequence is that of Large ribosomal subunit protein bL9 from Synechocystis sp. (strain ATCC 27184 / PCC 6803 / Kazusa).